Consider the following 353-residue polypeptide: MLYSLLYGYFNINLFQYLTFRAGLGFFIAFFLTLFLMPKFILWAKAKKANQPISSFVPSHQNKKDTPTMGGIVFVFATIVASVLCASLGNLYVLLGLIVLVGFSFVGFRDDYTKINQQSNAGMSAKMKFGMLFILSLIVSVLLSLKGLDTFLYAPFLKNPLFEMPTMLAVGFWVLVFLSTSNAVNLTDGLDGLASVPSIFTLLSLSIFVYVAGNAEFSKYLLYPKVIDVGELFVVSLALVGSLFGFLWYNCNPASVFMGDSGSLALGGFIAYNAIVSHNEILLVLMGSIFVIETLSVILQVGSYKTRKKRLFLMAPIHHHFEQKGWAENKVIVRFWIISMLSNLVALLSLKVR.

The next 10 helical transmembrane spans lie at 24 to 44 (LGFF…ILWA), 66 to 86 (TPTM…VLCA), 88 to 108 (LGNL…FVGF), 129 to 149 (FGML…KGLD), 160 to 180 (PLFE…FLST), 192 to 212 (GLAS…VYVA), 229 to 249 (VGEL…FLWY), 256 to 276 (VFMG…NAIV), 281 to 301 (ILLV…ILQV), and 330 to 350 (KVIV…LLSL).

The protein belongs to the glycosyltransferase 4 family. MraY subfamily. Requires Mg(2+) as cofactor.

It is found in the cell inner membrane. It catalyses the reaction UDP-N-acetyl-alpha-D-muramoyl-L-alanyl-gamma-D-glutamyl-meso-2,6-diaminopimeloyl-D-alanyl-D-alanine + di-trans,octa-cis-undecaprenyl phosphate = di-trans,octa-cis-undecaprenyl diphospho-N-acetyl-alpha-D-muramoyl-L-alanyl-D-glutamyl-meso-2,6-diaminopimeloyl-D-alanyl-D-alanine + UMP. It functions in the pathway cell wall biogenesis; peptidoglycan biosynthesis. In terms of biological role, catalyzes the initial step of the lipid cycle reactions in the biosynthesis of the cell wall peptidoglycan: transfers peptidoglycan precursor phospho-MurNAc-pentapeptide from UDP-MurNAc-pentapeptide onto the lipid carrier undecaprenyl phosphate, yielding undecaprenyl-pyrophosphoryl-MurNAc-pentapeptide, known as lipid I. The chain is Phospho-N-acetylmuramoyl-pentapeptide-transferase from Helicobacter pylori (strain ATCC 700392 / 26695) (Campylobacter pylori).